Reading from the N-terminus, the 252-residue chain is Probable phosphatase Shewmr4_2619 (252 aa).

The Zn(2+) site is built by H8, H10, H16, H41, E74, H102, H132, D193, and H195.

It belongs to the PHP family. Requires Zn(2+) as cofactor.

In Shewanella sp. (strain MR-4), this protein is Probable phosphatase Shewmr4_2619.